The primary structure comprises 110 residues: Large ribosomal subunit protein uL22 (110 aa).

Belongs to the universal ribosomal protein uL22 family. Part of the 50S ribosomal subunit.

Its function is as follows. This protein binds specifically to 23S rRNA; its binding is stimulated by other ribosomal proteins, e.g. L4, L17, and L20. It is important during the early stages of 50S assembly. It makes multiple contacts with different domains of the 23S rRNA in the assembled 50S subunit and ribosome. Functionally, the globular domain of the protein is located near the polypeptide exit tunnel on the outside of the subunit, while an extended beta-hairpin is found that lines the wall of the exit tunnel in the center of the 70S ribosome. This chain is Large ribosomal subunit protein uL22, found in Leptospira borgpetersenii serovar Hardjo-bovis (strain JB197).